Consider the following 155-residue polypeptide: Small ribosomal subunit protein uS7c (155 aa).

The protein belongs to the universal ribosomal protein uS7 family. Part of the 30S ribosomal subunit.

It localises to the plastid. It is found in the chloroplast. Its function is as follows. One of the primary rRNA binding proteins, it binds directly to 16S rRNA where it nucleates assembly of the head domain of the 30S subunit. This is Small ribosomal subunit protein uS7c (rps7) from Ananas comosus (Pineapple).